Consider the following 434-residue polypeptide: Glycoprotein U20 (434 aa).

Positions methionine 1 to serine 15 are cleaved as a signal peptide. The helical transmembrane segment at leucine 322–threonine 342 threads the bilayer.

The protein localises to the host endoplasmic reticulum membrane. Its subcellular location is the host lysosome membrane. Plays a role in the down-regulation of the host stress-induced NKG2D ligand UBPL1, which enables immune cells expressing the NKG2D receptor to recognize and annihilate infected cells prior to viral spread. The chain is Glycoprotein U20 (U20) from Human herpesvirus 6B (strain Z29) (HHV-6 variant B).